The following is a 135-amino-acid chain: uncharacterized protein (135 aa).

2 consecutive transmembrane segments (helical) span residues 11–31 (ILFFGLAFILVGFGLILGYLI) and 57–77 (LGTAAAVAGGVIAGELITDAI).

Its subcellular location is the cell membrane. This is an uncharacterized protein from Methanocaldococcus jannaschii (strain ATCC 43067 / DSM 2661 / JAL-1 / JCM 10045 / NBRC 100440) (Methanococcus jannaschii).